Reading from the N-terminus, the 347-residue chain is 3-isopropylmalate dehydrogenase (347 aa).

Positions 94, 104, 128, and 219 each coordinate substrate. Mg(2+) contacts are provided by D219, D243, and D247. Residue G279 to D291 coordinates NAD(+).

Belongs to the isocitrate and isopropylmalate dehydrogenases family. LeuB type 2 subfamily. As to quaternary structure, homodimer. It depends on Mg(2+) as a cofactor. Requires Mn(2+) as cofactor.

The protein resides in the cytoplasm. The enzyme catalyses (2R,3S)-3-isopropylmalate + NAD(+) = 4-methyl-2-oxopentanoate + CO2 + NADH. Its pathway is amino-acid biosynthesis; L-leucine biosynthesis; L-leucine from 3-methyl-2-oxobutanoate: step 3/4. Functionally, catalyzes the oxidation of 3-carboxy-2-hydroxy-4-methylpentanoate (3-isopropylmalate) to 3-carboxy-4-methyl-2-oxopentanoate. The product decarboxylates to 4-methyl-2 oxopentanoate. This Streptomyces griseus subsp. griseus (strain JCM 4626 / CBS 651.72 / NBRC 13350 / KCC S-0626 / ISP 5235) protein is 3-isopropylmalate dehydrogenase.